Reading from the N-terminus, the 268-residue chain is 4-hydroxy-tetrahydrodipicolinate reductase (268 aa).

8–13 (GAAGRM) is a binding site for NAD(+). R36 contributes to the NADP(+) binding site. NAD(+)-binding positions include 99–101 (GTT) and 123–126 (AANF). H156 (proton donor/acceptor) is an active-site residue. H157 is a binding site for (S)-2,3,4,5-tetrahydrodipicolinate. K160 functions as the Proton donor in the catalytic mechanism. (S)-2,3,4,5-tetrahydrodipicolinate is bound at residue 166–167 (GT).

It belongs to the DapB family.

It is found in the cytoplasm. It carries out the reaction (S)-2,3,4,5-tetrahydrodipicolinate + NAD(+) + H2O = (2S,4S)-4-hydroxy-2,3,4,5-tetrahydrodipicolinate + NADH + H(+). It catalyses the reaction (S)-2,3,4,5-tetrahydrodipicolinate + NADP(+) + H2O = (2S,4S)-4-hydroxy-2,3,4,5-tetrahydrodipicolinate + NADPH + H(+). It participates in amino-acid biosynthesis; L-lysine biosynthesis via DAP pathway; (S)-tetrahydrodipicolinate from L-aspartate: step 4/4. Its function is as follows. Catalyzes the conversion of 4-hydroxy-tetrahydrodipicolinate (HTPA) to tetrahydrodipicolinate. This is 4-hydroxy-tetrahydrodipicolinate reductase from Pseudomonas fluorescens (strain ATCC BAA-477 / NRRL B-23932 / Pf-5).